A 483-amino-acid chain; its full sequence is Replication factor C large subunit (483 aa).

44–51 (GSPGVGKT) is a binding site for ATP. Residues 415-483 (AVDHGGGIFA…DGQAGLSDFM (69 aa)) are disordered. Residues 430 to 443 (AQSDTESDDDDDGD) show a composition bias toward acidic residues. Positions 451-463 (DEPKEESVNREQS) are enriched in basic and acidic residues.

This sequence belongs to the activator 1 small subunits family. RfcL subfamily. As to quaternary structure, heteromultimer composed of small subunits (RfcS) and large subunits (RfcL).

In terms of biological role, part of the RFC clamp loader complex which loads the PCNA sliding clamp onto DNA. This is Replication factor C large subunit from Natronomonas pharaonis (strain ATCC 35678 / DSM 2160 / CIP 103997 / JCM 8858 / NBRC 14720 / NCIMB 2260 / Gabara) (Halobacterium pharaonis).